A 149-amino-acid chain; its full sequence is Putative pre-16S rRNA nuclease (149 aa).

This sequence belongs to the YqgF nuclease family.

It is found in the cytoplasm. In terms of biological role, could be a nuclease involved in processing of the 5'-end of pre-16S rRNA. The protein is Putative pre-16S rRNA nuclease of Burkholderia orbicola (strain MC0-3).